Consider the following 933-residue polypeptide: Protein translocase subunit SecA (933 aa).

ATP-binding positions include Q87, 105-109, and D515; that span reads GEGKT. 4 residues coordinate Zn(2+): C917, C919, C928, and H929.

Belongs to the SecA family. Monomer and homodimer. Part of the essential Sec protein translocation apparatus which comprises SecA, SecYEG and auxiliary proteins SecDF-YajC and YidC. The cofactor is Zn(2+).

The protein localises to the cell inner membrane. The protein resides in the cytoplasm. The enzyme catalyses ATP + H2O + cellular proteinSide 1 = ADP + phosphate + cellular proteinSide 2.. Functionally, part of the Sec protein translocase complex. Interacts with the SecYEG preprotein conducting channel. Has a central role in coupling the hydrolysis of ATP to the transfer of proteins into and across the cell membrane, serving both as a receptor for the preprotein-SecB complex and as an ATP-driven molecular motor driving the stepwise translocation of polypeptide chains across the membrane. The chain is Protein translocase subunit SecA from Burkholderia cenocepacia (strain ATCC BAA-245 / DSM 16553 / LMG 16656 / NCTC 13227 / J2315 / CF5610) (Burkholderia cepacia (strain J2315)).